We begin with the raw amino-acid sequence, 219 residues long: 7-cyano-7-deazaguanine synthase (219 aa).

ATP is bound at residue 10–20 (FSGGQDSTTCL). Zn(2+) contacts are provided by cysteine 188, cysteine 197, cysteine 200, and cysteine 203.

It belongs to the QueC family. In terms of assembly, homodimer. It depends on Zn(2+) as a cofactor.

It catalyses the reaction 7-carboxy-7-deazaguanine + NH4(+) + ATP = 7-cyano-7-deazaguanine + ADP + phosphate + H2O + H(+). It participates in purine metabolism; 7-cyano-7-deazaguanine biosynthesis. Its function is as follows. Catalyzes the ATP-dependent conversion of 7-carboxy-7-deazaguanine (CDG) to 7-cyano-7-deazaguanine (preQ(0)). This Clostridium botulinum (strain ATCC 19397 / Type A) protein is 7-cyano-7-deazaguanine synthase.